We begin with the raw amino-acid sequence, 531 residues long: T-complex protein 1 subunit zeta-2 (531 aa).

The protein belongs to the TCP-1 chaperonin family. As to quaternary structure, component of the chaperonin-containing T-complex (TRiC), a heterooligomeric complex of about 850 to 900 kDa that forms two stacked rings, 12 to 16 nm in diameter. In terms of tissue distribution, testis specific.

The protein localises to the cytoplasm. In terms of biological role, component of the chaperonin-containing T-complex (TRiC), a molecular chaperone complex that assists the folding of proteins upon ATP hydrolysis. This chain is T-complex protein 1 subunit zeta-2 (Cct6b), found in Mus musculus (Mouse).